Reading from the N-terminus, the 433-residue chain is Probable M18 family aminopeptidase 2 (433 aa).

The Zn(2+) site is built by histidine 84, histidine 161, and histidine 409.

It belongs to the peptidase M18 family. It depends on Zn(2+) as a cofactor.

The sequence is that of Probable M18 family aminopeptidase 2 from Clostridium novyi (strain NT).